The sequence spans 661 residues: MTELTPGIAAPLGAYYDGNGINFSLYSAHATGVELCLFDEQQREVRLPLATRSGDIWHGYLPGGKPGQRYGYRVHGPFDPAQGLRFNPNKLLLDPAARAVEGPVADDPYLHGGYDRPDRHDSAELMPKCVVIDEAYDWQDDCPPATPWGKTVIYEAHVRGLTLQHPEIPQVLRGSFAALGHPVMIAYFKRLGITALELLPVQQHSSEPRLQRLGLINYWGYNVLAPYAPDNRYSSLRTDMTPLREFRDAVKALHKAGIEVILDVVFNHSAELDTDGPTLSLRGIDNPGYYWLTPDGGYVNDTGCGNTLRLDQPQGVAWVMDCLRFWVGECHVDGFRFDLGSVLGRTPAFDRDAPLFQAMLADDLLSRCKLIAEPWDIGPGGYQVGEFPGRFAEWNDHYRDDMRRFWLQGDISLGQFAQRFAASSDLFNQRGRAPYASINMLTAHDGFTLQDLVSFSRKHNQLNGEGNRDGSDRNFSNNHGVEGPIADDAIVQRRRASRQALLATLLLSQGTPMLLAGDEHGHSQQGNNNAYCQDNAITWLDWATADDSLTAYTAALIHLRQQIPALQHDRWWQEGDGNVQWLNAQGQSLSAQQWEQGDLQLQICLSQRWLVVVNATQQAVEMTLPAGDWQLVAPFTQEDSRAVLPAWNQAAHSICVLVKKK.

Aspartate 338 acts as the Nucleophile in catalysis. The Proton donor role is filled by glutamate 373. The segment at 460 to 481 is disordered; the sequence is NQLNGEGNRDGSDRNFSNNHGV.

Belongs to the glycosyl hydrolase 13 family.

It catalyses the reaction Hydrolysis of (1-&gt;6)-alpha-D-glucosidic linkages to branches with degrees of polymerization of three or four glucose residues in limit dextrin.. It functions in the pathway glycan degradation; glycogen degradation. Functionally, removes maltotriose and maltotetraose chains that are attached by 1,6-alpha-linkage to the limit dextrin main chain, generating a debranched limit dextrin. This chain is Glycogen debranching enzyme, found in Serratia proteamaculans (strain 568).